Here is a 278-residue protein sequence, read N- to C-terminus: N-terminal Xaa-Pro-Lys N-methyltransferase 2 (278 aa).

S-adenosyl-L-methionine-binding positions include Gly123, Arg128, Asp145, 174 to 175, Gln190, and His195; that span reads LQ.

This sequence belongs to the methyltransferase superfamily. NTM1 family.

It is found in the nucleus. The catalysed reaction is N-terminal L-alanyl-L-prolyl-L-lysyl-[protein] + S-adenosyl-L-methionine = N-terminal N-methyl-L-alanyl-L-prolyl-L-lysyl-[protein] + S-adenosyl-L-homocysteine + H(+). It catalyses the reaction N-terminal L-prolyl-L-prolyl-L-lysyl-[protein] + S-adenosyl-L-methionine = N-terminal N-methyl-L-prolyl-L-prolyl-L-lysyl-[protein] + S-adenosyl-L-homocysteine + H(+). It carries out the reaction N-terminal L-seryl-L-prolyl-L-lysyl-[protein] + S-adenosyl-L-methionine = N-terminal N-methyl-L-seryl-L-prolyl-L-lysyl-[protein] + S-adenosyl-L-homocysteine + H(+). Its function is as follows. Alpha N-methyltransferase that methylates the N-terminus of target proteins containing the N-terminal motif [Ala/Pro/Ser]-Pro-Lys when the initiator Met is cleaved. Specifically catalyzes monomethylation of exposed alpha-amino group of Ala or Ser residue in the [Ala/Ser]-Pro-Lys motif and Pro in the Pro-Pro-Lys motif. Predominantly functions as a mono-methyltransferase but is also able to di-/tri-methylate the GPKRIA peptide and di-methylate the PPKRIA peptide (in vitro). May activate NTMT1 by priming its substrates for trimethylation. The polypeptide is N-terminal Xaa-Pro-Lys N-methyltransferase 2 (ntmt2) (Danio rerio (Zebrafish)).